A 236-amino-acid chain; its full sequence is Small ribosomal subunit protein uS3 (236 aa).

A KH type-2 domain is found at 39 to 107 (VREFLKKSLS…PAQISITEIK (69 aa)).

Belongs to the universal ribosomal protein uS3 family. Part of the 30S ribosomal subunit. Forms a tight complex with proteins S10 and S14.

Functionally, binds the lower part of the 30S subunit head. Binds mRNA in the 70S ribosome, positioning it for translation. This is Small ribosomal subunit protein uS3 from Wigglesworthia glossinidia brevipalpis.